Reading from the N-terminus, the 712-residue chain is Phosphomethylpyrimidine synthase (712 aa).

The tract at residues 14–49 (AIDITAPESTIPNKSKVPNKSAESSQSTVPKAPSRR) is disordered. Residues 20 to 42 (PESTIPNKSKVPNKSAESSQSTV) show a composition bias toward polar residues. Substrate contacts are provided by residues Asn283, Met312, Tyr341, His377, 397–399 (SRG), 438–441 (DGMR), and Glu477. A Zn(2+)-binding site is contributed by His481. A substrate-binding site is contributed by Tyr504. His545 is a binding site for Zn(2+). Residues Cys625, Cys628, and Cys633 each coordinate [4Fe-4S] cluster.

It belongs to the ThiC family. Homodimer. [4Fe-4S] cluster serves as cofactor.

It catalyses the reaction 5-amino-1-(5-phospho-beta-D-ribosyl)imidazole + S-adenosyl-L-methionine = 4-amino-2-methyl-5-(phosphooxymethyl)pyrimidine + CO + 5'-deoxyadenosine + formate + L-methionine + 3 H(+). The protein operates within cofactor biosynthesis; thiamine diphosphate biosynthesis. Functionally, catalyzes the synthesis of the hydroxymethylpyrimidine phosphate (HMP-P) moiety of thiamine from aminoimidazole ribotide (AIR) in a radical S-adenosyl-L-methionine (SAM)-dependent reaction. This chain is Phosphomethylpyrimidine synthase, found in Shewanella putrefaciens (strain CN-32 / ATCC BAA-453).